Consider the following 171-residue polypeptide: Protein-export protein SecB (171 aa).

Belongs to the SecB family. As to quaternary structure, homotetramer, a dimer of dimers. One homotetramer interacts with 1 SecA dimer.

It localises to the cytoplasm. Functionally, one of the proteins required for the normal export of preproteins out of the cell cytoplasm. It is a molecular chaperone that binds to a subset of precursor proteins, maintaining them in a translocation-competent state. It also specifically binds to its receptor SecA. This chain is Protein-export protein SecB, found in Histophilus somni (strain 129Pt) (Haemophilus somnus).